Here is a 191-residue protein sequence, read N- to C-terminus: Protein GrpE (191 aa).

Residues 1 to 10 (MNHEEQKVEA) are compositionally biased toward basic and acidic residues. Residues 1–28 (MNHEEQKVEAMEQVEAQPVEPTDVDSEV) form a disordered region.

Belongs to the GrpE family. As to quaternary structure, homodimer.

It localises to the cytoplasm. In terms of biological role, participates actively in the response to hyperosmotic and heat shock by preventing the aggregation of stress-denatured proteins, in association with DnaK and GrpE. It is the nucleotide exchange factor for DnaK and may function as a thermosensor. Unfolded proteins bind initially to DnaJ; upon interaction with the DnaJ-bound protein, DnaK hydrolyzes its bound ATP, resulting in the formation of a stable complex. GrpE releases ADP from DnaK; ATP binding to DnaK triggers the release of the substrate protein, thus completing the reaction cycle. Several rounds of ATP-dependent interactions between DnaJ, DnaK and GrpE are required for fully efficient folding. This is Protein GrpE from Aeromonas hydrophila subsp. hydrophila (strain ATCC 7966 / DSM 30187 / BCRC 13018 / CCUG 14551 / JCM 1027 / KCTC 2358 / NCIMB 9240 / NCTC 8049).